We begin with the raw amino-acid sequence, 340 residues long: DNA-directed RNA polymerase subunit alpha (340 aa).

Positions 1–236 (MLSLSKNWNT…EQLQLFISFE (236 aa)) are alpha N-terminal domain (alpha-NTD). Positions 251–340 (FSPYLLKRVD…LSKRYEDSYN (90 aa)) are alpha C-terminal domain (alpha-CTD).

It belongs to the RNA polymerase alpha chain family. As to quaternary structure, homodimer. The RNAP catalytic core consists of 2 alpha, 1 beta, 1 beta' and 1 omega subunit. When a sigma factor is associated with the core the holoenzyme is formed, which can initiate transcription.

The catalysed reaction is RNA(n) + a ribonucleoside 5'-triphosphate = RNA(n+1) + diphosphate. Its function is as follows. DNA-dependent RNA polymerase catalyzes the transcription of DNA into RNA using the four ribonucleoside triphosphates as substrates. The sequence is that of DNA-directed RNA polymerase subunit alpha from Rickettsia africae (strain ESF-5).